Here is a 1944-residue protein sequence, read N- to C-terminus: Anaphase-promoting complex subunit 1 (1944 aa).

A phosphoserine mark is found at serine 51, serine 60, serine 202, and serine 286. Threonine 291 is modified (phosphothreonine). The disordered stretch occupies residues 305–343 (LRSLSKGDSPVTSPFQNYSSIHSQSRSTSSPSLHSRSPS). 7 positions are modified to phosphoserine: serine 313, serine 341, serine 343, serine 355, serine 362, serine 373, and serine 377. Residues 323-343 (SSIHSQSRSTSSPSLHSRSPS) show a composition bias toward low complexity. Residues 373 to 396 (SHNQSPKRHSISHSPNSNSNGSFL) are disordered. Low complexity predominate over residues 384 to 394 (SHSPNSNSNGS). Residue threonine 537 is modified to Phosphothreonine. A phosphoserine mark is found at serine 547 and serine 555. A Phosphotyrosine modification is found at tyrosine 571. A phosphoserine mark is found at serine 686, serine 688, and serine 916. A disordered region spans residues 994 to 1016 (KGKSVLSSDVPSGTETEEEDDGM). The span at 998–1007 (VLSSDVPSGT) shows a compositional bias: polar residues. 4 PC repeats span residues 1297-1325 (AAGLALGMVCLGHGSNLIGMSDLNVPEQL), 1366-1404 (GATLALAMIYLKTNNRSIADWLRAPDTMYLLDFVKPEFL), 1467-1501 (GACLSLGFRFAGSENLSAFNCLHKFAKDFMTYLSA), and 1520-1552 (LLSLAMVMAGSGNLKVLQLCRFLHMKTGGEMNY).

This sequence belongs to the APC1 family. In terms of assembly, the mammalian APC/C is composed at least of 14 distinct subunits ANAPC1, ANAPC2, CDC27/APC3, ANAPC4, ANAPC5, CDC16/APC6, ANAPC7, CDC23/APC8, ANAPC10, ANAPC11, CDC26/APC12, ANAPC13, ANAPC15 and ANAPC16 that assemble into a complex of at least 19 chains with a combined molecular mass of around 1.2 MDa; APC/C interacts with FZR1 and FBXO5. Post-translationally, phosphorylated. Phosphorylation on Ser-355 occurs specifically during mitosis.

It participates in protein modification; protein ubiquitination. Its function is as follows. Component of the anaphase promoting complex/cyclosome (APC/C), a cell cycle-regulated E3 ubiquitin ligase that controls progression through mitosis and the G1 phase of the cell cycle. The APC/C complex acts by mediating ubiquitination and subsequent degradation of target proteins: it mainly mediates the formation of 'Lys-11'-linked polyubiquitin chains and, to a lower extent, the formation of 'Lys-48'- and 'Lys-63'-linked polyubiquitin chains. The APC/C complex catalyzes assembly of branched 'Lys-11'-/'Lys-48'-linked branched ubiquitin chains on target proteins. This is Anaphase-promoting complex subunit 1 (ANAPC1) from Homo sapiens (Human).